Reading from the N-terminus, the 600-residue chain is FERM domain-containing protein 3 (600 aa).

The FERM domain maps to 31–311 (MRCTIRLLDD…ENQAFYKYAK (281 aa)). The tract at residues 413–440 (SAPVLGNSPARGLETTADVTHDEEESIR) is disordered. The chain crosses the membrane as a helical span at residues 534–554 (LLLAAIGLLMVVLPLLLILLE).

The protein localises to the membrane. This chain is FERM domain-containing protein 3 (frmd3), found in Xenopus tropicalis (Western clawed frog).